The chain runs to 603 residues: UvrABC system protein C (603 aa).

The GIY-YIG domain maps to 15–92 (DQPGCYLMKD…IKKHDPRFNI (78 aa)). Residues 197–232 (KTVKNDLMKKMQEAAENMEFEKAGEFRDQINAIETT) form the UVR domain.

Belongs to the UvrC family. Interacts with UvrB in an incision complex.

It is found in the cytoplasm. Its function is as follows. The UvrABC repair system catalyzes the recognition and processing of DNA lesions. UvrC both incises the 5' and 3' sides of the lesion. The N-terminal half is responsible for the 3' incision and the C-terminal half is responsible for the 5' incision. This chain is UvrABC system protein C, found in Listeria innocua serovar 6a (strain ATCC BAA-680 / CLIP 11262).